The following is a 1079-amino-acid chain: MAVHAPYNHAPPPTQEINGQKPTLAPAITLERPADCINRGQYPAFYIICGYLNRLRADAPHKKYELLTRIFGNWREKVGPDLYPLIRLLLPDKDRERPVYNLKESMLARCYIDILSLEKHSEAAQRLIKWKQPAGNSPNPTGDFAKVCYNEIKARSTVEEGQLSVEAVNMLLDKLAVGKMKQKDYVPILKAINMQCTAEEQEWIIRIILKDLHISIRERGVLSAFHPDAIDLYNVCSDLKRVCWTLYDPGFRLNKNETHLELFHSFLPQLCGRMNDASLENIAKAIGAPKEFIMEEKLDGERIQLHMRGNGAQWFYCSRKAKDYTYLYGAHPGEGSLTRYIATAFQDNVRNVILDGEMMVWDPVVERYLAFGTLKSAALDHFNDETAPRPCFKVFDILFLNDHCLSRKRLSERKRLLRSGKIFKNIENYKGRLEFVDEKRGKNAKDIREYLERVVETKGEGLVVKKTDVIYQTNSRGYDWIKVKPEYSDQMGENLEVLVLGGWWGKGGRSGKISRLLCGLREQAFDDGTVERPSFKTFCSIGSGMSYSDYEWILNKHKKHWRPFDRSNPPPFMKLGPVGLDDKPDVYIEPENSFVIEVKASEIVPAGGYGIGFTLRFPRCKYIYYDKNSRDYALDDESKERDMWTSMSVDDFMDLFSRPKRSYDDSQGPGKRKKRKVIRSKKNHLISNFRGQKLSDADVETSIFSDMTFFIVKGTSDYPKADLEALVHKHGADFTQAQLSDLSAIVISPDQKNPLVRAQIRHGVNVIKPEWVFESIARRTALPFLKEFLVFASEEAQDGRYYNKTLEQYDKVSFVRDRTGGALVDEDGDADVEDEIMDGEDKDEIDVEESRESKNRRMAREDLKEKESNRTLEQKKLQEAWGLRSRASPGDSDSEPEEEMSLKEESDTDSERSRGLRAIYEDEEDGENDSHESDVGVNGDDYRAVPLSGLNDKEEGLMGESPEAMHYDEDRIFYHLAFYIDTAKNAAVNGLESSSPSFDTQERLVKVEKLLIENGGRVARSISDPKLTHIIMDDEDSRRYVELTRKTAMPKRKHIVTPKWVEDCVDEETLLDEDLYKPK.

A disordered region spans residues 1–20; the sequence is MAVHAPYNHAPPPTQEINGQ. ATP is bound by residues Glu-295, Lys-297, Leu-298, Arg-302, Glu-357, Phe-395, Glu-460, Lys-465, Lys-482, and Lys-484. Catalysis depends on Lys-297, which acts as the N6-AMP-lysine intermediate. Glu-357 is a binding site for Mg(2+). Residue Glu-460 participates in Mg(2+) binding. The 91-residue stretch at 699-789 folds into the BRCT 1 domain; it reads VETSIFSDMT…TALPFLKEFL (91 aa). The segment covering 838–847 has biased composition (acidic residues); that stretch reads DGEDKDEIDV. The segment at 838–942 is disordered; the sequence is DGEDKDEIDV…SDVGVNGDDY (105 aa). Basic and acidic residues-rich tracts occupy residues 848-878 and 900-914; these read EESRESKNRRMAREDLKEKESNRTLEQKKLQ and MSLKEESDTDSERSR. Positions 968–1078 constitute a BRCT 2 domain; it reads DEDRIFYHLA…TLLDEDLYKP (111 aa).

The protein belongs to the ATP-dependent DNA ligase family. It depends on Mg(2+) as a cofactor.

It is found in the nucleus. It catalyses the reaction ATP + (deoxyribonucleotide)n-3'-hydroxyl + 5'-phospho-(deoxyribonucleotide)m = (deoxyribonucleotide)n+m + AMP + diphosphate.. In terms of biological role, DNA ligase involved in DNA non-homologous end joining (NHEJ); required for double-strand break (DSB) repair. This is DNA ligase 4 (LIG4) from Cryptococcus neoformans var. neoformans serotype D (strain JEC21 / ATCC MYA-565) (Filobasidiella neoformans).